A 414-amino-acid chain; its full sequence is Gamma-glutamyl phosphate reductase (414 aa).

This sequence belongs to the gamma-glutamyl phosphate reductase family.

The protein resides in the cytoplasm. The enzyme catalyses L-glutamate 5-semialdehyde + phosphate + NADP(+) = L-glutamyl 5-phosphate + NADPH + H(+). Its pathway is amino-acid biosynthesis; L-proline biosynthesis; L-glutamate 5-semialdehyde from L-glutamate: step 2/2. Catalyzes the NADPH-dependent reduction of L-glutamate 5-phosphate into L-glutamate 5-semialdehyde and phosphate. The product spontaneously undergoes cyclization to form 1-pyrroline-5-carboxylate. This Geobacillus kaustophilus (strain HTA426) protein is Gamma-glutamyl phosphate reductase.